The following is a 505-amino-acid chain: Glycerol kinase (505 aa).

Thr-15 serves as a coordination point for ADP. 3 residues coordinate ATP: Thr-15, Thr-16, and Ser-17. Thr-15 lines the sn-glycerol 3-phosphate pocket. An ADP-binding site is contributed by Arg-19. Sn-glycerol 3-phosphate contacts are provided by Arg-85, Glu-86, Tyr-136, and Asp-249. Residues Arg-85, Glu-86, Tyr-136, Asp-249, and Gln-250 each contribute to the glycerol site. 2 residues coordinate ADP: Thr-271 and Gly-314. The ATP site is built by Thr-271, Gly-314, Gln-318, and Gly-415. The ADP site is built by Gly-415 and Asn-419.

It belongs to the FGGY kinase family.

It catalyses the reaction glycerol + ATP = sn-glycerol 3-phosphate + ADP + H(+). Its pathway is polyol metabolism; glycerol degradation via glycerol kinase pathway; sn-glycerol 3-phosphate from glycerol: step 1/1. Its activity is regulated as follows. Inhibited by fructose 1,6-bisphosphate (FBP). Key enzyme in the regulation of glycerol uptake and metabolism. Catalyzes the phosphorylation of glycerol to yield sn-glycerol 3-phosphate. The sequence is that of Glycerol kinase from Mycoplasma capricolum subsp. capricolum (strain California kid / ATCC 27343 / NCTC 10154).